The sequence spans 461 residues: Peptidyl-prolyl cis-trans isomerase-like 4 (461 aa).

In terms of domain architecture, PPIase cyclophilin-type spans 1–171 (MSVLLETSLG…KDIRIRHTVI (171 aa)). Positions 205–234 (EELDDNMDEESMEKLRREREARAQALTLEM) form a coiled coil. The 79-residue stretch at 248 to 326 (NVLFVCKLNP…HRIHVDFSQS (79 aa)) folds into the RRM domain. The tract at residues 341–461 (KRSGQRGGFG…DERYRERRRR (121 aa)) is disordered. 2 stretches are compositionally biased toward basic and acidic residues: residues 365–384 (DNAREKENDYTLVFDKGDKA) and 398–461 (SNRD…RRRR).

The protein belongs to the cyclophilin-type PPIase family. PPIL4 subfamily.

It is found in the nucleus. The catalysed reaction is [protein]-peptidylproline (omega=180) = [protein]-peptidylproline (omega=0). Functionally, PPIases accelerate the folding of proteins. It catalyzes the cis-trans isomerization of proline imidic peptide bonds in oligopeptides. The protein is Peptidyl-prolyl cis-trans isomerase-like 4 (cyp6) of Aspergillus oryzae (strain ATCC 42149 / RIB 40) (Yellow koji mold).